Consider the following 474-residue polypeptide: E3 ubiquitin-protein ligase RNF14 (474 aa).

Residues 11-137 (DELLALASIY…QFLKEETLAY (127 aa)) enclose the RWD domain. Residues 37-45 (RIYLDLPQN) carry the D-box motif. The interval 216–457 (KLFLCSICFC…DPGSPCFNRL (242 aa)) is TRIAD supradomain. Residues Cys220, Cys223, Cys238, His240, Cys243, Cys246, Cys265, Cys270, Cys309, Cys314, Cys329, Cys332, Cys337, Cys340, and His345 each coordinate Zn(2+). The RING-type 1 zinc-finger motif lies at 220–270 (CSICFCEKLGSECMYFLECRHVYCKACLKDYFEIQIRDGQVQCLNCPEPKC). The IBR-type zinc finger occupies 289 to 350 (ARYDRLLLQS…RLTYHGVSPC (62 aa)). Position 348 is a phosphoserine (Ser348). Cys350 is a binding site for Zn(2+). A coiled-coil region spans residues 351 to 395 (KVTAEKLMDLRNEYLQADEANKRLLDQRYGKRVIQKALEEMESKE). An interaction with androgen receptor region spans residues 361 to 474 (RNEYLQADEA…DDIWEDEVED (114 aa)). Positions 404 and 407 each coordinate Zn(2+). The RING-type 2; atypical zinc finger occupies 404-433 (CPCCGTPIEKLDGCNKMTCTGCMQYFCWIC). Cys417 is an active-site residue. Positions 422, 425, 430, 433, 445, and 453 each coordinate Zn(2+).

This sequence belongs to the RBR family. RNF14 subfamily. Interacts with GCN1; interaction takes place in response to ribosome collisions and is required for ubiquitination of EEF1A1/eEF1A. Interacts with the ubiquitin-conjugating enzymes UBE2E1 and UBE2E2. Interacts with AR/androgen receptor. Interacts with TCF7/TCF1, TCF7L1/TCF3 and TCF7L2/TCF4; promoting Wnt signaling. In terms of processing, RING-type zinc finger-dependent and UBE2E2-dependent autoubiquitination. In terms of tissue distribution, widely expressed.

It localises to the cytoplasm. The protein resides in the nucleus. The catalysed reaction is [E2 ubiquitin-conjugating enzyme]-S-ubiquitinyl-L-cysteine + [acceptor protein]-L-lysine = [E2 ubiquitin-conjugating enzyme]-L-cysteine + [acceptor protein]-N(6)-ubiquitinyl-L-lysine.. It functions in the pathway protein modification; protein ubiquitination. In terms of biological role, E3 ubiquitin-protein ligase that plays a key role in the RNF14-RNF25 translation quality control pathway, a pathway that takes place when a ribosome has stalled during translation, and which promotes ubiquitination and degradation of translation factors on stalled ribosomes. Recruited to stalled ribosomes by the ribosome collision sensor GCN1 and mediates 'Lys-6'-linked ubiquitination of target proteins, leading to their degradation. Mediates ubiquitination of EEF1A1/eEF1A and ETF1/eRF1 translation factors on stalled ribosomes, leading to their degradation. Also catalyzes ubiquitination of ribosomal proteins RPL0, RPL1, RPL12, RPS13 and RPS17. Specifically required to resolve RNA-protein cross-links caused by reactive aldehydes, which trigger translation stress by stalling ribosomes: acts by catalying 'Lys-6'-linked ubiquitination of RNA-protein cross-links, leading to their removal by the ATP-dependent unfoldase VCP and subsequent degradation by the proteasome. Independently of its function in the response to stalled ribosomes, acts as a regulator of transcription in Wnt signaling via its interaction with TCF transcription factors (TCF7/TCF1, TCF7L1/TCF3 and TCF7L2/TCF4). May also play a role as a coactivator for androgen- and, to a lesser extent, progesterone-dependent transcription. The polypeptide is E3 ubiquitin-protein ligase RNF14 (Homo sapiens (Human)).